A 629-amino-acid chain; its full sequence is Putrebactin synthase (629 aa).

Belongs to the IucA/IucC family. As to quaternary structure, homodimer.

The enzyme catalyses 2 N-(3-carboxypropanoyl)-N-hydroxyputrescine + 2 ATP = putrebactin + 2 AMP + 2 diphosphate + 2 H(+). The catalysed reaction is 2 N-(3-carboxypropanoyl)-N-hydroxyputrescine + ATP = pre-putrebactin + AMP + diphosphate + H(+). It carries out the reaction pre-putrebactin + ATP = putrebactin + AMP + diphosphate + H(+). Its pathway is siderophore biosynthesis. Requires Mg(2+) for activity. In terms of biological role, ligase involved in the biosynthesis of the siderophore putrebactin. Catalyzes the ATP-dependent head-to-tail dimerization of N-hydroxy-N-succinyl-putrescine (HSP) to give pre-putrebactin and subsequent macrocyclization of pre-putrebactin to give putrebactin. The protein is Putrebactin synthase of Shewanella sp. (strain MR-4).